The primary structure comprises 229 residues: 2,3-bisphosphoglycerate-dependent phosphoglycerate mutase (229 aa).

Substrate-binding positions include 8-15 (RHGESAWN), 21-22 (TG), R60, 87-90 (ERHY), K98, 114-115 (RR), and 183-184 (GN). Residue H9 is the Tele-phosphohistidine intermediate of the active site. E87 serves as the catalytic Proton donor/acceptor.

The protein belongs to the phosphoglycerate mutase family. BPG-dependent PGAM subfamily. In terms of assembly, homodimer.

It carries out the reaction (2R)-2-phosphoglycerate = (2R)-3-phosphoglycerate. Its pathway is carbohydrate degradation; glycolysis; pyruvate from D-glyceraldehyde 3-phosphate: step 3/5. Functionally, catalyzes the interconversion of 2-phosphoglycerate and 3-phosphoglycerate. The chain is 2,3-bisphosphoglycerate-dependent phosphoglycerate mutase from Polynucleobacter necessarius subsp. necessarius (strain STIR1).